The chain runs to 119 residues: Acidic phospholipase A2 CM-II (119 aa).

Disulfide bonds link cysteine 11-cysteine 71, cysteine 26-cysteine 118, cysteine 28-cysteine 44, cysteine 43-cysteine 99, cysteine 50-cysteine 92, cysteine 60-cysteine 85, and cysteine 78-cysteine 90. 3 residues coordinate Ca(2+): phenylalanine 27, glycine 29, and glycine 31. Histidine 47 is a catalytic residue. Aspartate 48 lines the Ca(2+) pocket. Aspartate 93 is an active-site residue.

The protein belongs to the phospholipase A2 family. Group I subfamily. D49 sub-subfamily. It depends on Ca(2+) as a cofactor. As to expression, expressed by the venom gland.

Its subcellular location is the secreted. The catalysed reaction is a 1,2-diacyl-sn-glycero-3-phosphocholine + H2O = a 1-acyl-sn-glycero-3-phosphocholine + a fatty acid + H(+). Functionally, PLA2 catalyzes the calcium-dependent hydrolysis of the 2-acyl groups in 3-sn-phosphoglycerides. This Aspidelaps scutatus (Shield-nose snake) protein is Acidic phospholipase A2 CM-II.